Here is a 1342-residue protein sequence, read N- to C-terminus: DNA-directed RNA polymerase subunit beta (1342 aa).

The protein belongs to the RNA polymerase beta chain family. In terms of assembly, the RNAP catalytic core consists of 2 alpha, 1 beta, 1 beta' and 1 omega subunit. When a sigma factor is associated with the core the holoenzyme is formed, which can initiate transcription.

The enzyme catalyses RNA(n) + a ribonucleoside 5'-triphosphate = RNA(n+1) + diphosphate. DNA-dependent RNA polymerase catalyzes the transcription of DNA into RNA using the four ribonucleoside triphosphates as substrates. This Vibrio parahaemolyticus serotype O3:K6 (strain RIMD 2210633) protein is DNA-directed RNA polymerase subunit beta.